Here is a 98-residue protein sequence, read N- to C-terminus: Integration host factor subunit alpha (98 aa).

The protein belongs to the bacterial histone-like protein family. As to quaternary structure, heterodimer of an alpha and a beta chain.

Functionally, this protein is one of the two subunits of integration host factor, a specific DNA-binding protein that functions in genetic recombination as well as in transcriptional and translational control. The protein is Integration host factor subunit alpha of Acinetobacter baumannii (strain AB307-0294).